Here is an 888-residue protein sequence, read N- to C-terminus: Kinesin-like protein KIF20A (888 aa).

S2 carries the post-translational modification N-acetylserine. S7, S14, and S21 each carry phosphoserine. The Kinesin motor domain occupies 63 to 506; it reads KVKVYLRVRP…AKFSAIASQL (444 aa). 159 to 166 is an ATP binding site; that stretch reads GVTNSGKT. S527 bears the Phosphoserine; by PLK1 mark. S531 is subject to Phosphoserine. Coiled coils occupy residues 559-587 and 630-760; these read KEEL…EVQL and ESLT…ERAC. Phosphoserine occurs at positions 667, 683, and 823. The globular stretch occupies residues 761 to 888; that stretch reads CHNTGAGKLR…LKSGPFGKKY (128 aa). The interval 823–863 is disordered; the sequence is STKKRLGANQENQQPNQQPPGKKPFLRNLLPRTPTCQSSTD. T855 bears the Phosphothreonine mark. 3 positions are modified to phosphoserine: S865, S876, and S881.

Belongs to the TRAFAC class myosin-kinesin ATPase superfamily. Kinesin family. Phosphorylated by PLK1 at Ser-527 during mitosis, creating a docking site for PLK1 and recruiting PLK1 at central spindle.

It is found in the golgi apparatus. Its subcellular location is the cytoplasm. The protein localises to the cytoskeleton. The protein resides in the spindle. Its function is as follows. Mitotic kinesin required for chromosome passenger complex (CPC)-mediated cytokinesis. Following phosphorylation by PLK1, involved in recruitment of PLK1 to the central spindle. Interacts with guanosine triphosphate (GTP)-bound forms of RAB6A and RAB6B. May act as a motor required for the retrograde RAB6 regulated transport of Golgi membranes and associated vesicles along microtubules. Has a microtubule plus end-directed motility. The sequence is that of Kinesin-like protein KIF20A (KIF20A) from Bos taurus (Bovine).